A 149-amino-acid chain; its full sequence is Nucleoside diphosphate kinase (149 aa).

Residues Lys-9, Phe-57, Arg-85, Thr-91, Arg-102, and Asn-112 each coordinate ATP. The active-site Pros-phosphohistidine intermediate is the His-115.

This sequence belongs to the NDK family. It depends on Mg(2+) as a cofactor.

It is found in the cytoplasm. The catalysed reaction is a 2'-deoxyribonucleoside 5'-diphosphate + ATP = a 2'-deoxyribonucleoside 5'-triphosphate + ADP. It carries out the reaction a ribonucleoside 5'-diphosphate + ATP = a ribonucleoside 5'-triphosphate + ADP. Functionally, major role in the synthesis of nucleoside triphosphates other than ATP. The ATP gamma phosphate is transferred to the NDP beta phosphate via a ping-pong mechanism, using a phosphorylated active-site intermediate. This chain is Nucleoside diphosphate kinase, found in Methanosarcina mazei (strain ATCC BAA-159 / DSM 3647 / Goe1 / Go1 / JCM 11833 / OCM 88) (Methanosarcina frisia).